The following is a 167-amino-acid chain: MIRRIVGKTLGLLGYTIQYGCIAHCAFEYIGEVVICSGPSMEPTIRNYDVLLCDNLSRHFFSIHKGDIIVAKSPDKPSVNICKRVIGLEGDKVCMSSPSALLKRHTYVPKGHVWLEGDNLDNSTDSRSYGPVPYALIRGRICLRVWPLESFGPLKESPNGRIQDNWP.

Residues Ser40 and Lys83 contribute to the active site.

Belongs to the peptidase S26 family. IMP1 subfamily. Heterodimer of 2 subunits, IMMPL1 and IMMPL2.

It localises to the mitochondrion inner membrane. Functionally, catalyzes the removal of transit peptides required for the targeting of proteins from the mitochondrial matrix, across the inner membrane, into the inter-membrane space. This chain is Mitochondrial inner membrane protease subunit 1 (immp1l), found in Xenopus tropicalis (Western clawed frog).